A 549-amino-acid chain; its full sequence is Probable protein kinase UbiB (549 aa).

Residues 123–501 (DFNETPLASA…QQQAHKSNYL (379 aa)) form the Protein kinase domain. ATP-binding positions include 129–137 (LASASISQV) and Lys-152. The active-site Proton acceptor is the Asp-287. The next 2 membrane-spanning stretches (helical) occupy residues 496 to 516 (HKSN…TLLI) and 520 to 540 (ATLW…FVGW).

It belongs to the ABC1 family. UbiB subfamily.

The protein resides in the cell inner membrane. The protein operates within cofactor biosynthesis; ubiquinone biosynthesis [regulation]. Its function is as follows. Is probably a protein kinase regulator of UbiI activity which is involved in aerobic coenzyme Q (ubiquinone) biosynthesis. The sequence is that of Probable protein kinase UbiB from Shewanella baltica (strain OS185).